Reading from the N-terminus, the 328-residue chain is PLASTID TRANSCRIPTIONALLY ACTIVE protein 6, chloroplastic (328 aa).

Low complexity predominate over residues 1–14; that stretch reads MASSAASPSLSLLS. Positions 1–21 are disordered; that stretch reads MASSAASPSLSLLSFTSKPPY. The transit peptide at 1 to 59 directs the protein to the chloroplast; it reads MASSAASPSLSLLSFTSKPPYPSGSQRLFASFRTDGLFAPLTLKSRRGRGIVVKVDDVD. Positions 267-275 match the Nuclear localization signal motif; the sequence is RKRDRKDDL. The RNA binding domain motif lies at 301–319; the sequence is EREEWTKTREDMEKHLRKL.

As to quaternary structure, subunit of the plastid-encoded RNA polymerase (PEP) complex. Component of a large nuclear subcomplex that may include other PEP subunits (e.g. PTAC12/HMR/PAP5, PTAC14/PAP7 and PTAC7/PAP12). Binds directly to PTAC12/HMR/PAP5 in the nucleus. Interacts with MTERF5. As to expression, mostly expressed in rosette leaves, stems and flowers, and, to a lower extent, in roots and cauline leaves.

The protein localises to the plastid. The protein resides in the chloroplast. It localises to the chloroplast thylakoid. It is found in the nucleus. Its subcellular location is the nucleoplasm. Essential protein involved in plastid gene expression and in chloroplast biogenesis. Links photomorphogenesis and chloroplast biogenesis through its dual localization; required for the formation of late photobodies in the nucleus, as well as for phytochrome B-mediated signaling cascade and subsequent reshaping of the plastid-encoded RNA polymerase (PEP) activity. Binds RNA via specific recognition motifs of viral origin. Recruited by MTERF5 to the transcriptionally paused region of psbEFLJ. Promotes leaf greening. In Arabidopsis thaliana (Mouse-ear cress), this protein is PLASTID TRANSCRIPTIONALLY ACTIVE protein 6, chloroplastic.